The following is a 98-amino-acid chain: NADH-ubiquinone oxidoreductase chain 4L (98 aa).

The next 3 helical transmembrane spans lie at 1–21 (MSMV…GLLV), 29–49 (SLLC…MAIL), and 61–81 (IILL…LVMV).

It belongs to the complex I subunit 4L family. As to quaternary structure, core subunit of respiratory chain NADH dehydrogenase (Complex I) which is composed of 45 different subunits.

The protein resides in the mitochondrion inner membrane. The enzyme catalyses a ubiquinone + NADH + 5 H(+)(in) = a ubiquinol + NAD(+) + 4 H(+)(out). Functionally, core subunit of the mitochondrial membrane respiratory chain NADH dehydrogenase (Complex I) which catalyzes electron transfer from NADH through the respiratory chain, using ubiquinone as an electron acceptor. Part of the enzyme membrane arm which is embedded in the lipid bilayer and involved in proton translocation. The polypeptide is NADH-ubiquinone oxidoreductase chain 4L (MT-ND4L) (Lynx canadensis (Canada lynx)).